Consider the following 364-residue polypeptide: UDP-N-acetylglucosamine--N-acetylmuramyl-(pentapeptide) pyrophosphoryl-undecaprenol N-acetylglucosamine transferase (364 aa).

UDP-N-acetyl-alpha-D-glucosamine is bound by residues 15–17 (TGG), Asn123, Arg164, Ser191, and Gln286.

It belongs to the glycosyltransferase 28 family. MurG subfamily.

The protein localises to the cell inner membrane. It carries out the reaction di-trans,octa-cis-undecaprenyl diphospho-N-acetyl-alpha-D-muramoyl-L-alanyl-D-glutamyl-meso-2,6-diaminopimeloyl-D-alanyl-D-alanine + UDP-N-acetyl-alpha-D-glucosamine = di-trans,octa-cis-undecaprenyl diphospho-[N-acetyl-alpha-D-glucosaminyl-(1-&gt;4)]-N-acetyl-alpha-D-muramoyl-L-alanyl-D-glutamyl-meso-2,6-diaminopimeloyl-D-alanyl-D-alanine + UDP + H(+). It participates in cell wall biogenesis; peptidoglycan biosynthesis. In terms of biological role, cell wall formation. Catalyzes the transfer of a GlcNAc subunit on undecaprenyl-pyrophosphoryl-MurNAc-pentapeptide (lipid intermediate I) to form undecaprenyl-pyrophosphoryl-MurNAc-(pentapeptide)GlcNAc (lipid intermediate II). This Prochlorococcus marinus (strain MIT 9515) protein is UDP-N-acetylglucosamine--N-acetylmuramyl-(pentapeptide) pyrophosphoryl-undecaprenol N-acetylglucosamine transferase.